The chain runs to 108 residues: Nucleoid-associated protein PLES_37951 (108 aa).

2 disordered regions span residues 1-25 (MMKG…KMQE) and 87-108 (NQEK…KMPF). A compositionally biased stretch (polar residues) spans 87-98 (NQEKMSGFTSGM).

This sequence belongs to the YbaB/EbfC family. Homodimer.

It localises to the cytoplasm. The protein localises to the nucleoid. In terms of biological role, binds to DNA and alters its conformation. May be involved in regulation of gene expression, nucleoid organization and DNA protection. This Pseudomonas aeruginosa (strain LESB58) protein is Nucleoid-associated protein PLES_37951.